The following is a 509-amino-acid chain: Activin receptor type-1 (509 aa).

The N-terminal stretch at Met-1–Ser-20 is a signal peptide. Residues Met-21–Glu-123 are Extracellular-facing. Residue Asn-102 is glycosylated (N-linked (GlcNAc...) asparagine). Residues Val-124 to Leu-146 form a helical membrane-spanning segment. Topologically, residues Arg-147 to Cys-509 are cytoplasmic. The GS domain maps to Ser-178–Gln-207. Residues Ile-208–Leu-502 enclose the Protein kinase domain. ATP-binding positions include Val-214–Val-222 and Lys-235. Residue Asp-336 is the Proton acceptor of the active site. Ser-501 is subject to Phosphoserine.

Belongs to the protein kinase superfamily. TKL Ser/Thr protein kinase family. TGFB receptor subfamily. As to quaternary structure, interacts with FKBP1A. Interacts with FCHO1. Interacts with CLU. Interacts with type II receptors AMHR2 and ACVR2A. Interacts with BMP7. Interacts with GDF2/BMP9. Interacts with BMP6 (when glycosylated); the interaction may induce HAMP expression. Interacts with TSC22D1/TSC-22. It depends on Mg(2+) as a cofactor. Mn(2+) is required as a cofactor. Urogenital ridge, testis, ovary, brain and lungs.

The protein resides in the membrane. The enzyme catalyses L-threonyl-[receptor-protein] + ATP = O-phospho-L-threonyl-[receptor-protein] + ADP + H(+). The catalysed reaction is L-seryl-[receptor-protein] + ATP = O-phospho-L-seryl-[receptor-protein] + ADP + H(+). Its function is as follows. Bone morphogenetic protein (BMP) type I receptor that is involved in a wide variety of biological processes, including bone, heart, cartilage, nervous, and reproductive system development and regulation. As a type I receptor, forms heterotetrameric receptor complexes with the type II receptors AMHR2, ACVR2A ors ACVR2B. Upon binding of ligands such as BMP7 or GDF2/BMP9 to the heteromeric complexes, type II receptors transphosphorylate ACVR1 intracellular domain. In turn, ACVR1 kinase domain is activated and subsequently phosphorylates SMAD1/5/8 proteins that transduce the signal. In addition to its role in mediating BMP pathway-specific signaling, suppresses TGFbeta/activin pathway signaling by interfering with the binding of activin to its type II receptor. Besides canonical SMAD signaling, can activate non-canonical pathways such as p38 mitogen-activated protein kinases/MAPKs. May promote the expression of HAMP, potentially via its interaction with BMP6. The chain is Activin receptor type-1 (Acvr1) from Rattus norvegicus (Rat).